Here is a 295-residue protein sequence, read N- to C-terminus: N-acetylmuramic acid 6-phosphate etherase (295 aa).

Residues V54–K217 form the SIS domain. Residue E82 is the Proton donor of the active site. Residue E113 is part of the active site.

Belongs to the GCKR-like family. MurNAc-6-P etherase subfamily. As to quaternary structure, homodimer.

It carries out the reaction N-acetyl-D-muramate 6-phosphate + H2O = N-acetyl-D-glucosamine 6-phosphate + (R)-lactate. It functions in the pathway amino-sugar metabolism; N-acetylmuramate degradation. In terms of biological role, specifically catalyzes the cleavage of the D-lactyl ether substituent of MurNAc 6-phosphate, producing GlcNAc 6-phosphate and D-lactate. This is N-acetylmuramic acid 6-phosphate etherase from Geobacillus thermodenitrificans (strain NG80-2).